A 203-amino-acid polypeptide reads, in one-letter code: Large ribosomal subunit protein bL25 (203 aa).

Belongs to the bacterial ribosomal protein bL25 family. CTC subfamily. In terms of assembly, part of the 50S ribosomal subunit; part of the 5S rRNA/L5/L18/L25 subcomplex. Contacts the 5S rRNA. Binds to the 5S rRNA independently of L5 and L18.

In terms of biological role, this is one of the proteins that binds to the 5S RNA in the ribosome where it forms part of the central protuberance. The chain is Large ribosomal subunit protein bL25 from Dechloromonas aromatica (strain RCB).